A 1035-amino-acid chain; its full sequence is Ephrin type-A receptor 6 (1035 aa).

The first 22 residues, 1-22 (MGGCEVREFLLQFGFFLPLLTA), serve as a signal peptide directing secretion. At 23–549 (WTGDCSHVSN…MAAEQGQILV (527 aa)) the chain is on the extracellular side. The 179-residue stretch at 33–211 (QVVLLDTTTV…FYKKCPFTVR (179 aa)) folds into the Eph LBD domain. Fibronectin type-III domains are found at residues 330–440 (PPSA…TDHD) and 441–536 (APSL…TGDE). N-linked (GlcNAc...) asparagine glycosylation is found at Asn-342, Asn-396, and Asn-409. A helical transmembrane segment spans residues 550–570 (IATAAVGGFTLLVILTLFFLI). The Cytoplasmic segment spans residues 571-1035 (TGRCQWYIKA…MHIQEKGFHV (465 aa)). Tyr-605 and Tyr-611 each carry phosphotyrosine; by autocatalysis. The Protein kinase domain maps to 630–943 (IRIERVIGAG…RNPSALHTLV (314 aa)). ATP is bound by residues 636 to 644 (IGAGEFGEV) and Lys-662. Asp-797 functions as the Proton acceptor in the catalytic mechanism. Phosphotyrosine; by autocatalysis is present on residues Tyr-830 and Tyr-977. Residues 960-1024 (PLFVTVGDWL…VSSIQTLRLH (65 aa)) enclose the SAM domain. Positions 1033-1035 (FHV) match the PDZ-binding motif.

The protein belongs to the protein kinase superfamily. Tyr protein kinase family. Ephrin receptor subfamily. Heterotetramer upon binding of the ligand. The heterotetramer is composed of an ephrin dimer and a receptor dimer. Oligomerization is probably required to induce biological responses. Interacts (via SAM domain) with ANKS1A (via SAM domain).

It localises to the membrane. The catalysed reaction is L-tyrosyl-[protein] + ATP = O-phospho-L-tyrosyl-[protein] + ADP + H(+). Functionally, receptor tyrosine kinase which binds promiscuously GPI-anchored ephrin-A family ligands residing on adjacent cells, leading to contact-dependent bidirectional signaling into neighboring cells. The signaling pathway downstream of the receptor is referred to as forward signaling while the signaling pathway downstream of the ephrin ligand is referred to as reverse signaling. The protein is Ephrin type-A receptor 6 (Epha6) of Mus musculus (Mouse).